Consider the following 459-residue polypeptide: Ribulose bisphosphate carboxylase large chain (459 aa).

Position 4 is an N6,N6,N6-trimethyllysine (Lys-4). Asn-113 and Thr-163 together coordinate substrate. Lys-165 acts as the Proton acceptor in catalysis. Lys-167 contributes to the substrate binding site. Mg(2+) contacts are provided by Lys-191, Asp-193, and Glu-194. Lys-191 carries the N6-carboxylysine modification. His-284 functions as the Proton acceptor in the catalytic mechanism. Arg-285, His-317, and Ser-369 together coordinate substrate.

The protein belongs to the RuBisCO large chain family. Type I subfamily. Heterohexadecamer of 8 large chains and 8 small chains; disulfide-linked. The disulfide link is formed within the large subunit homodimers. Mg(2+) serves as cofactor. In terms of processing, the disulfide bond which can form in the large chain dimeric partners within the hexadecamer appears to be associated with oxidative stress and protein turnover.

The protein localises to the plastid. It localises to the chloroplast. It carries out the reaction 2 (2R)-3-phosphoglycerate + 2 H(+) = D-ribulose 1,5-bisphosphate + CO2 + H2O. The catalysed reaction is D-ribulose 1,5-bisphosphate + O2 = 2-phosphoglycolate + (2R)-3-phosphoglycerate + 2 H(+). Functionally, ruBisCO catalyzes two reactions: the carboxylation of D-ribulose 1,5-bisphosphate, the primary event in carbon dioxide fixation, as well as the oxidative fragmentation of the pentose substrate in the photorespiration process. Both reactions occur simultaneously and in competition at the same active site. In Apium graveolens (Celery), this protein is Ribulose bisphosphate carboxylase large chain.